The chain runs to 486 residues: Alliin lyase 1 (486 aa).

Positions 1–28 (MVESYKKIGSCNKMPCLVILTCIIMSNS) are cleaved as a signal peptide. The propeptide occupies 29 to 38 (LVNNNNMVQA). An EGF-like; atypical domain is found at 51–97 (EAVANINCSEHGRAFLDGIISEGSPKCECNTCYTGPDCSEKIQGCSA). Asparagine 57 is a glycosylation site (N-linked (GlcNAc...) asparagine). Disulfide bonds link cysteine 58–cysteine 77, cysteine 79–cysteine 88, and cysteine 82–cysteine 95. Residue 130 to 138 (YFFNPVSNF) coordinates chloride. N-linked (GlcNAc...) asparagine glycans are attached at residues asparagine 184 and asparagine 229. Lysine 289 bears the N6-(pyridoxal phosphate)lysine mark. N-linked (GlcNAc...) asparagine glycosylation occurs at asparagine 366. Cysteine 406 and cysteine 414 are disulfide-bonded.

Belongs to the alliinase family. Homodimer. Pyridoxal 5'-phosphate serves as cofactor. As to expression, expressed in bulb (at protein level). Expressed in shoots.

It is found in the vacuole. It carries out the reaction an S-alkyl-L-cysteine S-oxide = an S-alkyl sulfenate + 2-aminoprop-2-enoate. Its function is as follows. Able to cleave the C-S bond of sulfoxide derivatives of Cys to produce allicin, thus giving rise to all sulfur compounds which are responsible for most of the properties of garlic, such as the specific smell and flavor as well as the health benefits like blood lipid or blood pressure lowering. The protein is Alliin lyase 1 of Allium sativum (Garlic).